The following is a 443-amino-acid chain: Xaa-Pro dipeptidase (443 aa).

Residues D246, D257, H339, E384, and E423 each contribute to the Mn(2+) site.

This sequence belongs to the peptidase M24B family. Bacterial-type prolidase subfamily. It depends on Mn(2+) as a cofactor.

The enzyme catalyses Xaa-L-Pro dipeptide + H2O = an L-alpha-amino acid + L-proline. Functionally, splits dipeptides with a prolyl residue in the C-terminal position. This chain is Xaa-Pro dipeptidase, found in Shigella dysenteriae serotype 1 (strain Sd197).